Here is a 183-residue protein sequence, read N- to C-terminus: uncharacterized protein (183 aa).

It belongs to the isochorismatase family.

This is an uncharacterized protein from Bacillus subtilis (strain 168).